A 545-amino-acid chain; its full sequence is Thermosome subunit (545 aa).

The protein belongs to the TCP-1 chaperonin family. As to quaternary structure, forms an oligomeric complex of eight-membered rings.

Its function is as follows. Molecular chaperone; binds unfolded polypeptides in vitro, and has a weak ATPase activity. The protein is Thermosome subunit (ths) of Desulfurococcus sp. (strain SY).